Reading from the N-terminus, the 573-residue chain is Isocitrate dehydrogenase kinase/phosphatase (573 aa).

ATP contacts are provided by residues 318–324 (APGVRGM) and Lys339. Residue Asp374 is part of the active site.

The protein belongs to the AceK family.

Its subcellular location is the cytoplasm. It catalyses the reaction L-seryl-[isocitrate dehydrogenase] + ATP = O-phospho-L-seryl-[isocitrate dehydrogenase] + ADP + H(+). In terms of biological role, bifunctional enzyme which can phosphorylate or dephosphorylate isocitrate dehydrogenase (IDH) on a specific serine residue. This is a regulatory mechanism which enables bacteria to bypass the Krebs cycle via the glyoxylate shunt in response to the source of carbon. When bacteria are grown on glucose, IDH is fully active and unphosphorylated, but when grown on acetate or ethanol, the activity of IDH declines drastically concomitant with its phosphorylation. The polypeptide is Isocitrate dehydrogenase kinase/phosphatase (Stutzerimonas stutzeri (strain A1501) (Pseudomonas stutzeri)).